The chain runs to 239 residues: MSESKKPLNHLAIIMDGNGRWAKKRHLPRFVGHRHGMDNIRNIALAANKLGIKVLTLYAFSTENWARPTDEVNYLMRLPIDFFDKFMPELMENNVRVNIMGFVDELPEKTYLVTQKAMAETANNTGMVLNFAFNYGSRREITAGVQEIARKVKVGEIDIDDISEKMVSDHLLTHSLAPYEDPDLLIRTSGEERLSNFLLWQMAYTEFSFSDKLWPDFDKTDLEELVKDYQGRNRRFGKV.

Residue Asp-16 is part of the active site. Asp-16 contacts Mg(2+). Substrate contacts are provided by residues 17–20 (GNGR), Trp-21, Arg-29, His-33, and 61–63 (STE). Asn-64 (proton acceptor) is an active-site residue. Residues Trp-65, Arg-67, Arg-187, and 193–195 (RLS) each bind substrate. Mg(2+) is bound at residue Glu-206.

Belongs to the UPP synthase family. Homodimer. Mg(2+) is required as a cofactor.

Catalyzes the condensation of isopentenyl diphosphate (IPP) with allylic pyrophosphates generating different type of terpenoids. The sequence is that of Isoprenyl transferase from Lactobacillus johnsonii (strain CNCM I-12250 / La1 / NCC 533).